The chain runs to 429 residues: SET domain-containing protein 8 (429 aa).

The SET domain maps to 17–232 (KQITIKKIRK…ENEEVTINYG (216 aa)).

The protein belongs to the class V-like SAM-binding methyltransferase superfamily.

The protein resides in the cytoplasm. It is found in the nucleus. This Schizosaccharomyces pombe (strain 972 / ATCC 24843) (Fission yeast) protein is SET domain-containing protein 8 (set8).